The primary structure comprises 217 residues: Pyridoxine/pyridoxamine 5'-phosphate oxidase (217 aa).

Residues 13 to 16 (RREY) and Lys71 contribute to the substrate site. FMN is bound by residues 66-71 (RIVLLK), 81-82 (YT), Arg87, Lys88, and Gln110. Substrate is bound by residues Tyr128, Arg132, and Ser136. Residues 145 to 146 (QS) and Trp190 each bind FMN. 196 to 198 (RLH) contacts substrate. Residue Arg200 participates in FMN binding.

It belongs to the pyridoxamine 5'-phosphate oxidase family. In terms of assembly, homodimer. FMN is required as a cofactor.

The enzyme catalyses pyridoxamine 5'-phosphate + O2 + H2O = pyridoxal 5'-phosphate + H2O2 + NH4(+). It catalyses the reaction pyridoxine 5'-phosphate + O2 = pyridoxal 5'-phosphate + H2O2. Its pathway is cofactor metabolism; pyridoxal 5'-phosphate salvage; pyridoxal 5'-phosphate from pyridoxamine 5'-phosphate: step 1/1. The protein operates within cofactor metabolism; pyridoxal 5'-phosphate salvage; pyridoxal 5'-phosphate from pyridoxine 5'-phosphate: step 1/1. In terms of biological role, catalyzes the oxidation of either pyridoxine 5'-phosphate (PNP) or pyridoxamine 5'-phosphate (PMP) into pyridoxal 5'-phosphate (PLP). The sequence is that of Pyridoxine/pyridoxamine 5'-phosphate oxidase from Serratia proteamaculans (strain 568).